The sequence spans 264 residues: tRNA pseudouridine synthase A (264 aa).

The active-site Nucleophile is Asp-54. Substrate is bound at residue Tyr-113.

This sequence belongs to the tRNA pseudouridine synthase TruA family. Homodimer.

The enzyme catalyses uridine(38/39/40) in tRNA = pseudouridine(38/39/40) in tRNA. In terms of biological role, formation of pseudouridine at positions 38, 39 and 40 in the anticodon stem and loop of transfer RNAs. The sequence is that of tRNA pseudouridine synthase A from Leptospira biflexa serovar Patoc (strain Patoc 1 / Ames).